A 406-amino-acid polypeptide reads, in one-letter code: Acetylornithine aminotransferase (406 aa).

Residues 108–109 (GA) and phenylalanine 141 each bind pyridoxal 5'-phosphate. Residue arginine 144 participates in N(2)-acetyl-L-ornithine binding. 226–229 (DEVQ) is a pyridoxal 5'-phosphate binding site. The residue at position 255 (lysine 255) is an N6-(pyridoxal phosphate)lysine. Residue threonine 283 coordinates N(2)-acetyl-L-ornithine. Residue threonine 284 participates in pyridoxal 5'-phosphate binding.

The protein belongs to the class-III pyridoxal-phosphate-dependent aminotransferase family. ArgD subfamily. As to quaternary structure, homodimer. Pyridoxal 5'-phosphate serves as cofactor.

The protein resides in the cytoplasm. It catalyses the reaction N(2)-acetyl-L-ornithine + 2-oxoglutarate = N-acetyl-L-glutamate 5-semialdehyde + L-glutamate. The protein operates within amino-acid biosynthesis; L-arginine biosynthesis; N(2)-acetyl-L-ornithine from L-glutamate: step 4/4. In Pseudomonas putida (strain ATCC 47054 / DSM 6125 / CFBP 8728 / NCIMB 11950 / KT2440), this protein is Acetylornithine aminotransferase.